The following is a 344-amino-acid chain: Ferredoxin--NADP reductase (344 aa).

FAD-binding residues include Asp36, Gln44, Tyr49, Val89, Phe127, Asp291, and Thr332.

This sequence belongs to the ferredoxin--NADP reductase type 2 family. In terms of assembly, homodimer. FAD is required as a cofactor.

It carries out the reaction 2 reduced [2Fe-2S]-[ferredoxin] + NADP(+) + H(+) = 2 oxidized [2Fe-2S]-[ferredoxin] + NADPH. This Beijerinckia indica subsp. indica (strain ATCC 9039 / DSM 1715 / NCIMB 8712) protein is Ferredoxin--NADP reductase.